Here is a 258-residue protein sequence, read N- to C-terminus: Imidazole glycerol phosphate synthase subunit HisF (258 aa).

Residues Asp11 and Asp130 contribute to the active site.

This sequence belongs to the HisA/HisF family. As to quaternary structure, heterodimer of HisH and HisF.

It is found in the cytoplasm. The enzyme catalyses 5-[(5-phospho-1-deoxy-D-ribulos-1-ylimino)methylamino]-1-(5-phospho-beta-D-ribosyl)imidazole-4-carboxamide + L-glutamine = D-erythro-1-(imidazol-4-yl)glycerol 3-phosphate + 5-amino-1-(5-phospho-beta-D-ribosyl)imidazole-4-carboxamide + L-glutamate + H(+). Its pathway is amino-acid biosynthesis; L-histidine biosynthesis; L-histidine from 5-phospho-alpha-D-ribose 1-diphosphate: step 5/9. Its function is as follows. IGPS catalyzes the conversion of PRFAR and glutamine to IGP, AICAR and glutamate. The HisF subunit catalyzes the cyclization activity that produces IGP and AICAR from PRFAR using the ammonia provided by the HisH subunit. This Klebsiella pneumoniae (strain 342) protein is Imidazole glycerol phosphate synthase subunit HisF.